We begin with the raw amino-acid sequence, 615 residues long: Probable ATP-citrate synthase subunit 1 (615 aa).

ATP is bound by residues 221-241 and 272-298; these read LIRF…EVGG and FKTE…KNQA. E238 serves as a coordination point for Mg(2+). The active-site Tele-phosphohistidine intermediate is H280. 299-309 lines the CoA pocket; it reads MREAGIYVPET. S359 is modified (phosphoserine).

This sequence belongs to the succinate/malate CoA ligase alpha subunit family. Composed of two subunits.

The protein localises to the cytoplasm. The catalysed reaction is oxaloacetate + acetyl-CoA + ADP + phosphate = citrate + ATP + CoA. In terms of biological role, catalyzes the formation of cytosolic acetyl-CoA, which is mainly used for the biosynthesis of fatty acids and sterols. The polypeptide is Probable ATP-citrate synthase subunit 1 (Schizosaccharomyces pombe (strain 972 / ATCC 24843) (Fission yeast)).